A 520-amino-acid polypeptide reads, in one-letter code: Protein nucleotidyltransferase YdiU (520 aa).

Positions 108, 110, 111, 130, 142, 143, 193, and 200 each coordinate ATP. Residue D269 is the Proton acceptor of the active site. Residues N270 and D279 each contribute to the Mg(2+) site. D279 contacts ATP.

This sequence belongs to the SELO family. Mg(2+) serves as cofactor. The cofactor is Mn(2+).

The catalysed reaction is L-seryl-[protein] + ATP = 3-O-(5'-adenylyl)-L-seryl-[protein] + diphosphate. It carries out the reaction L-threonyl-[protein] + ATP = 3-O-(5'-adenylyl)-L-threonyl-[protein] + diphosphate. It catalyses the reaction L-tyrosyl-[protein] + ATP = O-(5'-adenylyl)-L-tyrosyl-[protein] + diphosphate. The enzyme catalyses L-histidyl-[protein] + UTP = N(tele)-(5'-uridylyl)-L-histidyl-[protein] + diphosphate. The catalysed reaction is L-seryl-[protein] + UTP = O-(5'-uridylyl)-L-seryl-[protein] + diphosphate. It carries out the reaction L-tyrosyl-[protein] + UTP = O-(5'-uridylyl)-L-tyrosyl-[protein] + diphosphate. Its function is as follows. Nucleotidyltransferase involved in the post-translational modification of proteins. It can catalyze the addition of adenosine monophosphate (AMP) or uridine monophosphate (UMP) to a protein, resulting in modifications known as AMPylation and UMPylation. The protein is Protein nucleotidyltransferase YdiU of Cupriavidus pinatubonensis (strain JMP 134 / LMG 1197) (Cupriavidus necator (strain JMP 134)).